The sequence spans 282 residues: HMG box-containing protein R545 (282 aa).

A disordered region spans residues 1–282; that stretch reads MPKKTATKAN…KKEASDEESD (282 aa). Over residues 16-29 the composition is skewed to acidic residues; that stretch reads DSENDSVVSEEEDN. Over residues 70–87 the composition is skewed to basic residues; sequence KGKVNAKKAPAKKAPVKK. The segment covering 93–121 has biased composition (acidic residues); sequence DSDNEEDEASEDGSDDEEDVVSADDSDSD. Positions 127–153 are enriched in basic residues; that stretch reads KAAKKAPAKKAPAKKAPAKKAPAKKGK. Basic and acidic residues-rich tracts occupy residues 176-187 and 197-214; these read TKKDGDKPKKPL and RMPE…KEYM. The HMG box DNA-binding region spans 183 to 252; the sequence is PKKPLSDYQK…KAPAKGGSKS (70 aa). Positions 253 to 273 are enriched in basic residues; the sequence is TAKKAPAKKAPAKKAPAKKSK.

The protein is HMG box-containing protein R545 of Acanthamoeba polyphaga mimivirus (APMV).